The chain runs to 278 residues: Large ribosomal subunit protein uL2c (278 aa).

Disordered regions lie at residues 32–56 (SLTS…HRGG) and 203–256 (QSIG…PTIG). Basic residues predominate over residues 209 to 220 (GSKRWQGKRPKV).

The protein belongs to the universal ribosomal protein uL2 family. Part of the 50S ribosomal subunit.

The protein resides in the plastid. Its subcellular location is the chloroplast. The protein is Large ribosomal subunit protein uL2c (rpl2) of Chara vulgaris (Common stonewort).